Consider the following 294-residue polypeptide: 3-methyl-2-oxobutanoate hydroxymethyltransferase 1 (294 aa).

Mg(2+) is bound at residue aspartate 55. 3-methyl-2-oxobutanoate-binding positions include 55-56 (DS) and lysine 123. Residue glutamate 192 is the Proton acceptor of the active site.

This sequence belongs to the PanB family. In terms of assembly, homodecamer; pentamer of dimers. Mg(2+) serves as cofactor.

It localises to the cytoplasm. The enzyme catalyses 3-methyl-2-oxobutanoate + (6R)-5,10-methylene-5,6,7,8-tetrahydrofolate + H2O = 2-dehydropantoate + (6S)-5,6,7,8-tetrahydrofolate. It functions in the pathway cofactor biosynthesis; (R)-pantothenate biosynthesis; (R)-pantoate from 3-methyl-2-oxobutanoate: step 1/2. In terms of biological role, catalyzes the reversible reaction in which hydroxymethyl group from 5,10-methylenetetrahydrofolate is transferred onto alpha-ketoisovalerate to form ketopantoate. This is 3-methyl-2-oxobutanoate hydroxymethyltransferase 1 from Methylibium petroleiphilum (strain ATCC BAA-1232 / LMG 22953 / PM1).